A 438-amino-acid chain; its full sequence is tRNA modification GTPase MnmE (438 aa).

Positions 20, 76, and 115 each coordinate (6S)-5-formyl-5,6,7,8-tetrahydrofolate. Residues 210-370 (NFTIMILGRR…LKCFINKIVD (161 aa)) enclose the TrmE-type G domain. K(+) is bound at residue Asn-220. Residues 220–225 (NVGKST), 239–245 (TNIPGTT), and 264–267 (DTAG) contribute to the GTP site. Residue Ser-224 coordinates Mg(2+). 3 residues coordinate K(+): Thr-239, Ile-241, and Thr-244. Residue Thr-245 participates in Mg(2+) binding. Lys-438 provides a ligand contact to (6S)-5-formyl-5,6,7,8-tetrahydrofolate.

The protein belongs to the TRAFAC class TrmE-Era-EngA-EngB-Septin-like GTPase superfamily. TrmE GTPase family. As to quaternary structure, homodimer. Heterotetramer of two MnmE and two MnmG subunits. Requires K(+) as cofactor.

The protein resides in the cytoplasm. Exhibits a very high intrinsic GTPase hydrolysis rate. Involved in the addition of a carboxymethylaminomethyl (cmnm) group at the wobble position (U34) of certain tRNAs, forming tRNA-cmnm(5)s(2)U34. The protein is tRNA modification GTPase MnmE of Carsonella ruddii (strain PV).